Consider the following 204-residue polypeptide: HTH-type transcriptional repressor KstR (204 aa).

Positions 18–78 (RERRKRILDA…SALGREFERI (61 aa)) constitute an HTH tetR-type domain. Residues 41–60 (QMRAVAERADVAVGTLYRYF) constitute a DNA-binding region (H-T-H motif).

In terms of assembly, homodimer.

Its function is as follows. Controls the expression of genes used for utilizing diverse lipids as energy sources. The sequence is that of HTH-type transcriptional repressor KstR (kstR) from Mycolicibacterium smegmatis (strain ATCC 700084 / mc(2)155) (Mycobacterium smegmatis).